Consider the following 145-residue polypeptide: D-aminoacyl-tRNA deacylase (145 aa).

The short motif at 137–138 (GP) is the Gly-cisPro motif, important for rejection of L-amino acids element.

Belongs to the DTD family. As to quaternary structure, homodimer.

Its subcellular location is the cytoplasm. It catalyses the reaction glycyl-tRNA(Ala) + H2O = tRNA(Ala) + glycine + H(+). The catalysed reaction is a D-aminoacyl-tRNA + H2O = a tRNA + a D-alpha-amino acid + H(+). An aminoacyl-tRNA editing enzyme that deacylates mischarged D-aminoacyl-tRNAs. Also deacylates mischarged glycyl-tRNA(Ala), protecting cells against glycine mischarging by AlaRS. Acts via tRNA-based rather than protein-based catalysis; rejects L-amino acids rather than detecting D-amino acids in the active site. By recycling D-aminoacyl-tRNA to D-amino acids and free tRNA molecules, this enzyme counteracts the toxicity associated with the formation of D-aminoacyl-tRNA entities in vivo and helps enforce protein L-homochirality. In Azotobacter vinelandii (strain DJ / ATCC BAA-1303), this protein is D-aminoacyl-tRNA deacylase.